A 641-amino-acid polypeptide reads, in one-letter code: WW domain-binding protein 11 (641 aa).

The segment covering 1–11 (MGRRSTSSTKS) has biased composition (polar residues). The tract at residues 1–37 (MGRRSTSSTKSGKFMNPTDQARKEARKRELKKNKKQR) is disordered. Residues 1–45 (MGRRSTSSTKSGKFMNPTDQARKEARKRELKKNKKQRMMVRAAVL) are required for nuclear import. N6-acetyllysine is present on Lys13. Basic residues predominate over residues 28 to 37 (RELKKNKKQR). Positions 75 to 133 (EKVLKDKRKKLRETFERILRLYEKENPDIYKELRKLEVEYEQKRAQLSQYFDAVKNAQH) form a coiled coil. A Phosphoserine modification is found at Ser181. Residues 186–213 (LGHGVPRLPPGRKPPGPPPGPPPPQVVQ) are disordered. Position 192 is an omega-N-methylarginine (Arg192). The segment covering 192–210 (RLPPGRKPPGPPPGPPPPQ) has biased composition (pro residues). Residues 217–221 (RKVGF) are interaction with PP1. Phosphotyrosine is present on Tyr236. Residues 236 to 552 (YSPELAQRGH…RPKADDTSAA (317 aa)) form a disordered region. Residue Ser237 is modified to Phosphoserine. Residues 253 to 263 (SEDDGYPEDMD) are compositionally biased toward acidic residues. Basic and acidic residues predominate over residues 276-304 (TDKSDGESDGDEFVHRDNGERDNNEEKKS). Residues Ser279 and Ser283 each carry the phosphoserine modification. The interval 306–310 (LSVRF) is interaction with PP1. Positions 351–365 (EFSEDDDEDDSDDSE) are enriched in acidic residues. 3 positions are modified to phosphoserine: Ser353, Ser361, and Ser364. Residues 366–380 (AEKQSQKQHKEESHS) show a composition bias toward basic and acidic residues. Over residues 386–404 (ASSQQQAPPQSVPPSQIQA) the composition is skewed to low complexity. 3 stretches are compositionally biased toward pro residues: residues 405–447 (PPMP…PPGM), 456–504 (RLLP…PPRP), and 510–530 (PLVP…PLPN). Positions 455–466 (PRLLPPGPPPGR) match the PGR motif. Lys557 participates in a covalent cross-link: Glycyl lysine isopeptide (Lys-Gly) (interchain with G-Cter in SUMO2). Lys565 carries the post-translational modification N6-acetyllysine. Residue Lys572 forms a Glycyl lysine isopeptide (Lys-Gly) (interchain with G-Cter in SUMO2) linkage. Residues 587 to 623 (RENKGATAAPQRKSEDDSAVPLAKAAPKSGPSVPVSV) are disordered. Ser600 bears the Phosphoserine mark.

Interacts with PPP1CA, PPP1CB and PPP1CC. Interacts via the PGR motif with PQBP1 in the nucleus. Interacts with the WW domains of WBP4. In terms of tissue distribution, ubiquitous. Highly expressed in the heart, pancreas, kidney skeletal muscle, placenta and brain (at protein level). Weakly expressed in liver and lung.

It is found in the nucleus. The protein localises to the cytoplasm. Activates pre-mRNA splicing. May inhibit PP1 phosphatase activity. In Homo sapiens (Human), this protein is WW domain-binding protein 11.